A 179-amino-acid chain; its full sequence is Gamma-glutamyl cyclotransferase verK (179 aa).

The protein belongs to the class-I pyridoxal-phosphate-dependent aminotransferase family.

The enzyme catalyses an alpha-(gamma-L-glutamyl)-L-amino acid = 5-oxo-L-proline + an L-alpha-amino acid. The protein operates within mycotoxin biosynthesis. Its function is as follows. Gamma-glutamyl cyclotransferase; part of the gene cluster that mediates the biosynthesis of 11'-deoxyverticillin A, one of the dimeric epipolythiodioxopiperazines (ETPs) from the verticillin family that act as mycotoxins. 11'-deoxyverticillin A is required for normal conidiation. The nonribosomal peptide synthetase verP is speculated to be responsible for condensation of amino acids to form the carbon skeleton of verticillin, whereas the cluster-specific tailoring enzymes are involved in further modifications leading to the production of 11'-deoxyverticillin A. This Clonostachys rogersoniana protein is Gamma-glutamyl cyclotransferase verK.